We begin with the raw amino-acid sequence, 374 residues long: Probable dual-specificity RNA methyltransferase RlmN (374 aa).

Residue glutamate 108 is the Proton acceptor of the active site. The Radical SAM core domain maps to 114 to 361 (YSDRNTVCIS…SCTVRDTRGR (248 aa)). Cysteines 121 and 367 form a disulfide. [4Fe-4S] cluster is bound by residues cysteine 128, cysteine 132, and cysteine 135. Residues 188–189 (GE), serine 222, 245–247 (SLH), and asparagine 324 each bind S-adenosyl-L-methionine. The active-site S-methylcysteine intermediate is the cysteine 367.

This sequence belongs to the radical SAM superfamily. RlmN family. [4Fe-4S] cluster serves as cofactor.

It localises to the cytoplasm. It carries out the reaction adenosine(2503) in 23S rRNA + 2 reduced [2Fe-2S]-[ferredoxin] + 2 S-adenosyl-L-methionine = 2-methyladenosine(2503) in 23S rRNA + 5'-deoxyadenosine + L-methionine + 2 oxidized [2Fe-2S]-[ferredoxin] + S-adenosyl-L-homocysteine. The enzyme catalyses adenosine(37) in tRNA + 2 reduced [2Fe-2S]-[ferredoxin] + 2 S-adenosyl-L-methionine = 2-methyladenosine(37) in tRNA + 5'-deoxyadenosine + L-methionine + 2 oxidized [2Fe-2S]-[ferredoxin] + S-adenosyl-L-homocysteine. Specifically methylates position 2 of adenine 2503 in 23S rRNA and position 2 of adenine 37 in tRNAs. This is Probable dual-specificity RNA methyltransferase RlmN from Mycobacterium sp. (strain JLS).